The following is a 351-amino-acid chain: S-adenosylmethionine:tRNA ribosyltransferase-isomerase (351 aa).

The protein belongs to the QueA family. As to quaternary structure, monomer.

The protein resides in the cytoplasm. It carries out the reaction 7-aminomethyl-7-carbaguanosine(34) in tRNA + S-adenosyl-L-methionine = epoxyqueuosine(34) in tRNA + adenine + L-methionine + 2 H(+). Its pathway is tRNA modification; tRNA-queuosine biosynthesis. Its function is as follows. Transfers and isomerizes the ribose moiety from AdoMet to the 7-aminomethyl group of 7-deazaguanine (preQ1-tRNA) to give epoxyqueuosine (oQ-tRNA). The sequence is that of S-adenosylmethionine:tRNA ribosyltransferase-isomerase from Idiomarina loihiensis (strain ATCC BAA-735 / DSM 15497 / L2-TR).